Here is a 283-residue protein sequence, read N- to C-terminus: MWGGEMNIFKQKEREFALNRIPVLKEKFPESNQILNFLSHILEYHNSIISEISDLSISLDNQNIESRLGKGKPALKLSEYDFEPFLKYFYPLLNIVYEHGTPQMKERVEHLQSLEKKEILSLISSFLENGISDDMLRFFLISYLQPILYTFADKVKFEHERWFKNYCPVCGSKPSVSFIMDTEDWEGARFLRCSVCLTDWLYVRTKCVNCGNVEDDSLDYFISSELDYIEIQTCKKCNSYIKIIDLRKDGLAVPDLEDIASVSLDLWAQEQGFIKVERNFMGY.

The protein belongs to the FdhE family.

Its subcellular location is the cytoplasm. In terms of biological role, necessary for formate dehydrogenase activity. The chain is Protein FdhE homolog from Aquifex aeolicus (strain VF5).